A 75-amino-acid chain; its full sequence is Large ribosomal subunit protein bL31 (75 aa).

It belongs to the bacterial ribosomal protein bL31 family. Type A subfamily. In terms of assembly, part of the 50S ribosomal subunit.

Its function is as follows. Binds the 23S rRNA. The sequence is that of Large ribosomal subunit protein bL31 from Chlorobium limicola (strain DSM 245 / NBRC 103803 / 6330).